Reading from the N-terminus, the 175-residue chain is Sec-independent protein translocase protein TatB (175 aa).

Residues 1–21 (MLDLGLSKMALIGVVALVVLG) form a helical membrane-spanning segment. Over residues 94-115 (SAVSPGGSAAADAPDGPSAASG) the composition is skewed to low complexity. 2 disordered regions span residues 94–118 (SAVS…GEPS) and 153–175 (VQSG…ARFL). Positions 160 to 175 (VARHRPASLRRPARFL) are enriched in basic residues.

The protein belongs to the TatB family. In terms of assembly, the Tat system comprises two distinct complexes: a TatABC complex, containing multiple copies of TatA, TatB and TatC subunits, and a separate TatA complex, containing only TatA subunits. Substrates initially bind to the TatABC complex, which probably triggers association of the separate TatA complex to form the active translocon.

It localises to the cell inner membrane. Part of the twin-arginine translocation (Tat) system that transports large folded proteins containing a characteristic twin-arginine motif in their signal peptide across membranes. Together with TatC, TatB is part of a receptor directly interacting with Tat signal peptides. TatB may form an oligomeric binding site that transiently accommodates folded Tat precursor proteins before their translocation. The protein is Sec-independent protein translocase protein TatB of Burkholderia pseudomallei (strain 1106a).